We begin with the raw amino-acid sequence, 369 residues long: Phosphoribosyl pyrophosphate synthase-associated protein 2 (369 aa).

At Met1 the chain carries N-acetylmethionine. Thr5 bears the Phosphothreonine mark. Phosphoserine is present on residues Ser219, Ser227, and Ser233.

It belongs to the ribose-phosphate pyrophosphokinase family. In terms of assembly, binds to PRPS1 and PRPS2.

In terms of biological role, seems to play a negative regulatory role in 5-phosphoribose 1-diphosphate synthesis. In Pongo abelii (Sumatran orangutan), this protein is Phosphoribosyl pyrophosphate synthase-associated protein 2 (PRPSAP2).